Reading from the N-terminus, the 301-residue chain is Phospholipase A1 VesT1.02 (301 aa).

Disulfide bonds link C87-C294, C176-C245, C181-C262, C219-C228, C240-C246, and C267-C269. S137 acts as the Nucleophile in catalysis. Residue D165 is the Charge relay system of the active site. The Charge relay system role is filled by H230.

It belongs to the AB hydrolase superfamily. Lipase family. Is not glycosylated. As to expression, expressed by the venom gland.

The protein resides in the secreted. The enzyme catalyses a 1,2-diacyl-sn-glycero-3-phosphocholine + H2O = a 2-acyl-sn-glycero-3-phosphocholine + a fatty acid + H(+). Catalyzes the hydrolysis of phosphatidylcholine with phospholipase A1 activity. Shows hemolytic activity. The sequence is that of Phospholipase A1 VesT1.02 from Vespa tropica (Greater banded hornet).